The following is a 286-amino-acid chain: Bifunctional protein FolD (286 aa).

NADP(+) contacts are provided by residues 164 to 166, serine 193, and isoleucine 234; that span reads GRS.

It belongs to the tetrahydrofolate dehydrogenase/cyclohydrolase family. As to quaternary structure, homodimer.

It catalyses the reaction (6R)-5,10-methylene-5,6,7,8-tetrahydrofolate + NADP(+) = (6R)-5,10-methenyltetrahydrofolate + NADPH. It carries out the reaction (6R)-5,10-methenyltetrahydrofolate + H2O = (6R)-10-formyltetrahydrofolate + H(+). It participates in one-carbon metabolism; tetrahydrofolate interconversion. Catalyzes the oxidation of 5,10-methylenetetrahydrofolate to 5,10-methenyltetrahydrofolate and then the hydrolysis of 5,10-methenyltetrahydrofolate to 10-formyltetrahydrofolate. The protein is Bifunctional protein FolD of Nitratidesulfovibrio vulgaris (strain ATCC 29579 / DSM 644 / CCUG 34227 / NCIMB 8303 / VKM B-1760 / Hildenborough) (Desulfovibrio vulgaris).